The sequence spans 537 residues: CTP synthase (537 aa).

Residues 1–267 (MAKYIFVTGG…DEYVIKRLNL (267 aa)) are amidoligase domain. A CTP-binding site is contributed by serine 13. Residue serine 13 coordinates UTP. 14–19 (SLGKGI) lines the ATP pocket. Position 54 (tyrosine 54) interacts with L-glutamine. Aspartate 71 is a binding site for ATP. Aspartate 71 and glutamate 141 together coordinate Mg(2+). CTP is bound by residues 148-150 (DIE), 188-193 (KTKPTQ), and lysine 224. Residues 188–193 (KTKPTQ) and lysine 224 contribute to the UTP site. Position 240-242 (240-242 (RDV)) interacts with ATP. Positions 292-534 (EVALVGKYVD…VKAMLNLKIN (243 aa)) constitute a Glutamine amidotransferase type-1 domain. Glycine 354 is a binding site for L-glutamine. Catalysis depends on cysteine 381, which acts as the Nucleophile; for glutamine hydrolysis. L-glutamine is bound by residues 382 to 385 (LGMQ), glutamate 405, and arginine 462. Catalysis depends on residues histidine 507 and glutamate 509.

This sequence belongs to the CTP synthase family. As to quaternary structure, homotetramer.

The enzyme catalyses UTP + L-glutamine + ATP + H2O = CTP + L-glutamate + ADP + phosphate + 2 H(+). It catalyses the reaction L-glutamine + H2O = L-glutamate + NH4(+). It carries out the reaction UTP + NH4(+) + ATP = CTP + ADP + phosphate + 2 H(+). Its pathway is pyrimidine metabolism; CTP biosynthesis via de novo pathway; CTP from UDP: step 2/2. With respect to regulation, allosterically activated by GTP, when glutamine is the substrate; GTP has no effect on the reaction when ammonia is the substrate. The allosteric effector GTP functions by stabilizing the protein conformation that binds the tetrahedral intermediate(s) formed during glutamine hydrolysis. Inhibited by the product CTP, via allosteric rather than competitive inhibition. Catalyzes the ATP-dependent amination of UTP to CTP with either L-glutamine or ammonia as the source of nitrogen. Regulates intracellular CTP levels through interactions with the four ribonucleotide triphosphates. The sequence is that of CTP synthase from Caldanaerobacter subterraneus subsp. tengcongensis (strain DSM 15242 / JCM 11007 / NBRC 100824 / MB4) (Thermoanaerobacter tengcongensis).